Reading from the N-terminus, the 754-residue chain is 5-methyltetrahydropteroyltriglutamate--homocysteine methyltransferase (754 aa).

5-methyltetrahydropteroyltri-L-glutamate contacts are provided by residues 17–20 (RELK) and Lys-117. L-homocysteine contacts are provided by residues 431-433 (IGS) and Glu-484. Residues 431–433 (IGS) and Glu-484 each bind L-methionine. 5-methyltetrahydropteroyltri-L-glutamate is bound by residues 515–516 (RC) and Trp-561. Asp-599 lines the L-homocysteine pocket. Residue Asp-599 participates in L-methionine binding. 5-methyltetrahydropteroyltri-L-glutamate is bound at residue Glu-605. The Zn(2+) site is built by His-641, Cys-643, and Glu-665. His-694 (proton donor) is an active-site residue. Residue Cys-726 participates in Zn(2+) binding.

It belongs to the vitamin-B12 independent methionine synthase family. Zn(2+) is required as a cofactor.

The catalysed reaction is 5-methyltetrahydropteroyltri-L-glutamate + L-homocysteine = tetrahydropteroyltri-L-glutamate + L-methionine. It participates in amino-acid biosynthesis; L-methionine biosynthesis via de novo pathway; L-methionine from L-homocysteine (MetE route): step 1/1. In terms of biological role, catalyzes the transfer of a methyl group from 5-methyltetrahydrofolate to homocysteine resulting in methionine formation. The polypeptide is 5-methyltetrahydropteroyltriglutamate--homocysteine methyltransferase (Salmonella enteritidis PT4 (strain P125109)).